The following is a 289-amino-acid chain: Energy-coupling factor transporter ATP-binding protein EcfA2 (289 aa).

The ABC transporter domain occupies 3–246; the sequence is IEIKDVEHRY…KDDIAALGLD (244 aa). ATP is bound at residue 40-47; that stretch reads GHTGSGKS.

The protein belongs to the ABC transporter superfamily. Energy-coupling factor EcfA family. As to quaternary structure, forms a stable energy-coupling factor (ECF) transporter complex composed of 2 membrane-embedded substrate-binding proteins (S component), 2 ATP-binding proteins (A component) and 2 transmembrane proteins (T component).

It is found in the cell membrane. In terms of biological role, ATP-binding (A) component of a common energy-coupling factor (ECF) ABC-transporter complex. Unlike classic ABC transporters this ECF transporter provides the energy necessary to transport a number of different substrates. This chain is Energy-coupling factor transporter ATP-binding protein EcfA2, found in Bacillus licheniformis (strain ATCC 14580 / DSM 13 / JCM 2505 / CCUG 7422 / NBRC 12200 / NCIMB 9375 / NCTC 10341 / NRRL NRS-1264 / Gibson 46).